The chain runs to 319 residues: sn-1-specific diacylglycerol lipase ABHD11 (319 aa).

The transit peptide at 1-28 (MTLKLAVLRQIFQGSKGWHLWQHWRAFY) directs the protein to the mitochondrion. One can recognise an AB hydrolase-1 domain in the interval 69–304 (PPLVLLHGLF…GAGHWVHADK (236 aa)). Catalysis depends on charge relay system residues S143, E239, and H298.

The protein belongs to the AB hydrolase superfamily. Post-translationally, phosphorylated.

It localises to the mitochondrion. The protein resides in the mitochondrion matrix. It carries out the reaction 1-octadecanoyl-2-(5Z,8Z,11Z,14Z-eicosatetraenoyl)-sn-glycerol + H2O = 2-(5Z,8Z,11Z,14Z-eicosatetraenoyl)-glycerol + octadecanoate + H(+). The enzyme catalyses a 1,2-diacyl-sn-glycerol + H2O = a 2-acylglycerol + a fatty acid + H(+). It catalyses the reaction a 1,3-diacyl-sn-glycerol + H2O = a 1-acyl-sn-glycerol + a fatty acid + H(+). The catalysed reaction is 1-octadecanoyl-2-(9Z-octadecenoyl)-sn-glycerol + H2O = 2-(9Z-octadecenoyl)-glycerol + octadecanoate + H(+). It carries out the reaction 1-octadecanoyl-2-(4Z,7Z,10Z,13Z,16Z,19Z-docosahexaenoyl)-sn-glycerol + H2O = 2-(4Z,7Z,10Z,13Z,16Z,19Z-docosahexaenoyl)-glycerol + octadecanoate + H(+). The enzyme catalyses 1,2-didecanoylglycerol + H2O = decanoylglycerol + decanoate + H(+). In terms of biological role, catalyzes the hydrolysis of diacylglycerol in vitro and may function as a key regulator in lipid metabolism, namely by regulating the intracellular levels of diacylglycerol. 1,2-diacyl-sn-glycerols are the preferred substrate over 1,3-diacyl-sn-glycerols. The enzyme hydrolyzes stearate in preference to palmitate from the sn-1 position of 1,2-diacyl-sn-glycerols. This is sn-1-specific diacylglycerol lipase ABHD11 from Xenopus tropicalis (Western clawed frog).